The chain runs to 224 residues: Mannose-specific lectin 3 (224 aa).

2 Bulb-type lectin domains span residues 2-111 and 117-222; these read NNVL…PAAA and RNVL…VWST. Cystine bridges form between Cys-30-Cys-52 and Cys-145-Cys-170.

As to quaternary structure, heterotetramer of 2 domain 1 and 2 domain 2 chains arranged as a dimer of domain 1/domain 2 heterodimers.

Functionally, mannose-specific lectin. Has weak agglutinating activity towards trypsin-treated erythrocytes from rabbit but not from human. In Crocus vernus (Dutch crocus), this protein is Mannose-specific lectin 3.